Consider the following 278-residue polypeptide: Large ribosomal subunit protein uL2 (278 aa).

Composition is skewed to basic residues over residues 210 to 219 and 252 to 263; these read RSRWLGKRPQ and KKSRGIKTRNSK. A disordered region spans residues 210–278; it reads RSRWLGKRPQ…LIIRHRKGNK (69 aa).

The protein belongs to the universal ribosomal protein uL2 family. Part of the 50S ribosomal subunit. Forms a bridge to the 30S subunit in the 70S ribosome.

Functionally, one of the primary rRNA binding proteins. Required for association of the 30S and 50S subunits to form the 70S ribosome, for tRNA binding and peptide bond formation. It has been suggested to have peptidyltransferase activity; this is somewhat controversial. Makes several contacts with the 16S rRNA in the 70S ribosome. In Lactobacillus johnsonii (strain CNCM I-12250 / La1 / NCC 533), this protein is Large ribosomal subunit protein uL2.